The chain runs to 394 residues: Tubulin-like protein CetZ5 (394 aa).

Residues 10–14 (QAGGN), 110–112 (GTG), Glu142, Asn169, and Asn187 contribute to the GTP site.

This sequence belongs to the CetZ family.

The protein localises to the cytoplasm. Involved in cell shape control. The chain is Tubulin-like protein CetZ5 from Haloferax volcanii (strain ATCC 29605 / DSM 3757 / JCM 8879 / NBRC 14742 / NCIMB 2012 / VKM B-1768 / DS2) (Halobacterium volcanii).